We begin with the raw amino-acid sequence, 241 residues long: DNA repair protein RecO (241 aa).

The protein belongs to the RecO family.

In terms of biological role, involved in DNA repair and RecF pathway recombination. The protein is DNA repair protein RecO of Dinoroseobacter shibae (strain DSM 16493 / NCIMB 14021 / DFL 12).